Here is a 149-residue protein sequence, read N- to C-terminus: MKAVIQRVKEAKVSVEGRVVGEIGQGVLVLLGVEIGDACPQADWMAEKIVNLRIFADSEGKMNLALPEVKGEMLAVSQFTLAGNCSKGRRPSFDTAAAPEEANRLYSYFMGQVWERGVPVQSGIFQADMEVSLVNDGPVTFILETPPKR.

The Gly-cisPro motif, important for rejection of L-amino acids signature appears at G137–P138.

The protein belongs to the DTD family. In terms of assembly, homodimer.

It is found in the cytoplasm. It catalyses the reaction glycyl-tRNA(Ala) + H2O = tRNA(Ala) + glycine + H(+). The catalysed reaction is a D-aminoacyl-tRNA + H2O = a tRNA + a D-alpha-amino acid + H(+). In terms of biological role, an aminoacyl-tRNA editing enzyme that deacylates mischarged D-aminoacyl-tRNAs. Also deacylates mischarged glycyl-tRNA(Ala), protecting cells against glycine mischarging by AlaRS. Acts via tRNA-based rather than protein-based catalysis; rejects L-amino acids rather than detecting D-amino acids in the active site. By recycling D-aminoacyl-tRNA to D-amino acids and free tRNA molecules, this enzyme counteracts the toxicity associated with the formation of D-aminoacyl-tRNA entities in vivo and helps enforce protein L-homochirality. The polypeptide is D-aminoacyl-tRNA deacylase (Geobacter sp. (strain M21)).